We begin with the raw amino-acid sequence, 227 residues long: DNA mismatch repair protein MutH (227 aa).

The protein belongs to the MutH family.

The protein resides in the cytoplasm. Sequence-specific endonuclease that cleaves unmethylated GATC sequences. It is involved in DNA mismatch repair. The protein is DNA mismatch repair protein MutH of Vibrio vulnificus (strain CMCP6).